We begin with the raw amino-acid sequence, 361 residues long: sn-glycerol-3-phosphate import ATP-binding protein UgpC (361 aa).

Residues 4 to 235 (LSLKGVRKSY…PATVFVAGFI (232 aa)) form the ABC transporter domain. 37 to 44 (GPSGCGKS) serves as a coordination point for ATP.

It belongs to the ABC transporter superfamily. sn-glycerol-3-phosphate importer (TC 3.A.1.1.3) family. As to quaternary structure, the complex is composed of two ATP-binding proteins (UgpC), two transmembrane proteins (UgpA and UgpE) and a solute-binding protein (UgpB).

It is found in the cell inner membrane. It carries out the reaction sn-glycerol 3-phosphate(out) + ATP + H2O = sn-glycerol 3-phosphate(in) + ADP + phosphate + H(+). Its function is as follows. Part of the ABC transporter complex UgpBAEC involved in sn-glycerol-3-phosphate (G3P) import. Responsible for energy coupling to the transport system. This is sn-glycerol-3-phosphate import ATP-binding protein UgpC from Burkholderia cenocepacia (strain HI2424).